The chain runs to 400 residues: Malonyl CoA-acyl carrier protein transacylase (400 aa).

Active-site residues include Ser92 and His201.

The protein belongs to the FabD family.

It carries out the reaction holo-[ACP] + malonyl-CoA = malonyl-[ACP] + CoA. In terms of biological role, is involved in the mycosubtilin synthetase assembly, by catalyzing the transfer of malonyl groups to a specific acyl-carrier-protein domain on MycA. In Bacillus subtilis, this protein is Malonyl CoA-acyl carrier protein transacylase (fenF).